The following is a 173-amino-acid chain: Small ribosomal subunit protein uS7 (173 aa).

The protein belongs to the universal ribosomal protein uS7 family. In terms of assembly, part of the 30S ribosomal subunit. Contacts proteins S9 and S11.

Functionally, one of the primary rRNA binding proteins, it binds directly to 16S rRNA where it nucleates assembly of the head domain of the 30S subunit. Is located at the subunit interface close to the decoding center, probably blocks exit of the E-site tRNA. This Orientia tsutsugamushi (strain Boryong) (Rickettsia tsutsugamushi) protein is Small ribosomal subunit protein uS7.